A 1020-amino-acid polypeptide reads, in one-letter code: Sodium/potassium-transporting ATPase subunit alpha-2 (1020 aa).

Residues 1 to 5 (MGRGA) constitute a propeptide that is removed on maturation. A disordered region spans residues 1–31 (MGRGAGREYSPAATTAENGGGKKKQKEKELD). Topologically, residues 6 to 85 (GREYSPAATT…NALTPPPTTP (80 aa)) are cytoplasmic. Residue serine 10 is modified to Phosphoserine. Residues 80–82 (PPP) are interaction with phosphoinositide-3 kinase. A helical membrane pass occupies residues 86–106 (EWVKFCRQLFGGFSILLWIGA). Residues 107–129 (ILCFLAFGIQAAMEDEPSNDNLY) are Extracellular-facing. The helical transmembrane segment at 130–150 (LGVVLAAVVIVTGCFSYYQEA) threads the bilayer. The Cytoplasmic segment spans residues 151–286 (KSSKIMDSFK…VGRTPIAMEI (136 aa)). Positions 212 to 227 (DNSSLTGESEPQTRSP) are enriched in polar residues. The interval 212–231 (DNSSLTGESEPQTRSPEFTH) is disordered. The helical transmembrane segment at 287–306 (EHFIQLITGVAVFLGVSFFV) threads the bilayer. Residues 307–318 (LSLILGYSWLEA) are Extracellular-facing. The helical transmembrane segment at 319 to 336 (VIFLIGIIVANVPEGLLA) threads the bilayer. Residues 337–769 (TVTVCLTLTA…EEGRLIFDNL (433 aa)) are Cytoplasmic-facing. The active-site 4-aspartylphosphate intermediate is the aspartate 374. A phosphoserine mark is found at serine 439, serine 450, serine 496, and serine 559. At threonine 570 the chain carries Phosphothreonine. A phosphoserine mark is found at serine 587 and serine 672. Mg(2+) contacts are provided by aspartate 714 and aspartate 718. Residues 770 to 789 (KKSIAYTLTSNIPEITPFLL) traverse the membrane as a helical segment. The Extracellular portion of the chain corresponds to 790–799 (FIIANIPLPL). A helical transmembrane segment spans residues 800–820 (GTVTILCIDLGTDMVPAISLA). The Cytoplasmic portion of the chain corresponds to 821–840 (YEAAESDIMKRQPRNPQTDK). Phosphoserine is present on serine 826. A helical membrane pass occupies residues 841–863 (LVNERLISMAYGQIGMIQALGGF). Over 864-915 (FTYFVILAENGFLPSRLLGIRLDWDDRSMNDLEDSYGQEWTYEQRKVVEFTC) the chain is Extracellular. The chain crosses the membrane as a helical span at residues 916-935 (HTAFFASIVVVQWADLIICK). Residues 936 to 948 (TRRNSVFQQGMKN) are Cytoplasmic-facing. At serine 940 the chain carries Phosphoserine; by PKA. Residues 949–967 (KILIFGLLEETALAAFLSY) form a helical membrane-spanning segment. Residues 968 to 982 (CPGMGVALRMYPLKV) are Extracellular-facing. Residues 983 to 1003 (TWWFCAFPYSLLIFIYDEVRK) traverse the membrane as a helical segment. Over 1004 to 1020 (LILRRYPGGWVEKETYY) the chain is Cytoplasmic.

Belongs to the cation transport ATPase (P-type) (TC 3.A.3) family. Type IIC subfamily. As to quaternary structure, the sodium/potassium-transporting ATPase is composed of a catalytic alpha subunit, an auxiliary non-catalytic beta subunit and an additional regulatory subunit. Interacts with regulatory subunit FXYD1.

It is found in the membrane. The protein resides in the cell membrane. The enzyme catalyses K(+)(out) + Na(+)(in) + ATP + H2O = K(+)(in) + Na(+)(out) + ADP + phosphate + H(+). In terms of biological role, this is the catalytic component of the active enzyme, which catalyzes the hydrolysis of ATP coupled with the exchange of sodium and potassium ions across the plasma membrane. This action creates the electrochemical gradient of sodium and potassium, providing the energy for active transport of various nutrients. This chain is Sodium/potassium-transporting ATPase subunit alpha-2 (ATP1A2), found in Bos taurus (Bovine).